Consider the following 182-residue polypeptide: ATP synthase subunit delta (182 aa).

Belongs to the ATPase delta chain family. In terms of assembly, F-type ATPases have 2 components, F(1) - the catalytic core - and F(0) - the membrane proton channel. F(1) has five subunits: alpha(3), beta(3), gamma(1), delta(1), epsilon(1). CF(0) has four main subunits: a(1), b(1), b'(1) and c(10-14). The alpha and beta chains form an alternating ring which encloses part of the gamma chain. F(1) is attached to F(0) by a central stalk formed by the gamma and epsilon chains, while a peripheral stalk is formed by the delta, b and b' chains.

It localises to the cellular thylakoid membrane. F(1)F(0) ATP synthase produces ATP from ADP in the presence of a proton or sodium gradient. F-type ATPases consist of two structural domains, F(1) containing the extramembraneous catalytic core and F(0) containing the membrane proton channel, linked together by a central stalk and a peripheral stalk. During catalysis, ATP synthesis in the catalytic domain of F(1) is coupled via a rotary mechanism of the central stalk subunits to proton translocation. Functionally, this protein is part of the stalk that links CF(0) to CF(1). It either transmits conformational changes from CF(0) to CF(1) or is implicated in proton conduction. The protein is ATP synthase subunit delta of Synechococcus sp. (strain WH7803).